The chain runs to 284 residues: Tropomyosin, smooth muscle/fibroblast CTM1 (284 aa).

A coiled-coil region spans residues 1-284; sequence MEAIKKKMTM…DVTLQGIGDL (284 aa). Positions 18 to 38 are disordered; the sequence is AIDRAEQAETDKKSAEDKATG.

Belongs to the tropomyosin family. In terms of assembly, homodimer. As to expression, predominantly expressed in body wall muscle and heart, low in intestine, ovary and larval tail muscle.

Its function is as follows. The function of tropomyosin in smooth muscle and non-muscle cells is not clear. The polypeptide is Tropomyosin, smooth muscle/fibroblast CTM1 (CTM1) (Ciona intestinalis (Transparent sea squirt)).